The sequence spans 353 residues: Probable dual-specificity RNA methyltransferase RlmN (353 aa).

Residue glutamate 104 is the Proton acceptor of the active site. The 230-residue stretch at 112-341 (DGGRKTICIS…ILNRRSPGKD (230 aa)) folds into the Radical SAM core domain. The cysteines at positions 119 and 346 are disulfide-linked. [4Fe-4S] cluster contacts are provided by cysteine 126, cysteine 130, and cysteine 133. Residues 173–174 (GE), serine 205, 228–230 (SLN), and asparagine 304 contribute to the S-adenosyl-L-methionine site. Cysteine 346 (S-methylcysteine intermediate) is an active-site residue.

It belongs to the radical SAM superfamily. RlmN family. Requires [4Fe-4S] cluster as cofactor.

The protein localises to the cytoplasm. It catalyses the reaction adenosine(2503) in 23S rRNA + 2 reduced [2Fe-2S]-[ferredoxin] + 2 S-adenosyl-L-methionine = 2-methyladenosine(2503) in 23S rRNA + 5'-deoxyadenosine + L-methionine + 2 oxidized [2Fe-2S]-[ferredoxin] + S-adenosyl-L-homocysteine. The catalysed reaction is adenosine(37) in tRNA + 2 reduced [2Fe-2S]-[ferredoxin] + 2 S-adenosyl-L-methionine = 2-methyladenosine(37) in tRNA + 5'-deoxyadenosine + L-methionine + 2 oxidized [2Fe-2S]-[ferredoxin] + S-adenosyl-L-homocysteine. Specifically methylates position 2 of adenine 2503 in 23S rRNA and position 2 of adenine 37 in tRNAs. The chain is Probable dual-specificity RNA methyltransferase RlmN from Leptospira interrogans serogroup Icterohaemorrhagiae serovar copenhageni (strain Fiocruz L1-130).